A 126-amino-acid polypeptide reads, in one-letter code: MILGIGIDIIEIIRIKNAIERNSKFMKRVFTEKEIKYFEKINFRHESIAGRFAAKEAIVKALGTGFRNMKITDIEVINDKVGKPLVELKGGALEKIKVYKDVKIHLSISHNRDNAIAYSIIEGECI.

Residues aspartate 8 and glutamate 56 each contribute to the Mg(2+) site.

It belongs to the P-Pant transferase superfamily. AcpS family. Requires Mg(2+) as cofactor.

Its subcellular location is the cytoplasm. The enzyme catalyses apo-[ACP] + CoA = holo-[ACP] + adenosine 3',5'-bisphosphate + H(+). Its function is as follows. Transfers the 4'-phosphopantetheine moiety from coenzyme A to a Ser of acyl-carrier-protein. This chain is Holo-[acyl-carrier-protein] synthase, found in Clostridium tetani (strain Massachusetts / E88).